The primary structure comprises 106 residues: Iron-sulfur cluster assembly protein CyaY (106 aa).

This sequence belongs to the frataxin family.

Functionally, involved in iron-sulfur (Fe-S) cluster assembly. May act as a regulator of Fe-S biogenesis. This Citrobacter koseri (strain ATCC BAA-895 / CDC 4225-83 / SGSC4696) protein is Iron-sulfur cluster assembly protein CyaY.